The primary structure comprises 482 residues: Aspartyl/glutamyl-tRNA(Asn/Gln) amidotransferase subunit B (482 aa).

It belongs to the GatB/GatE family. GatB subfamily. As to quaternary structure, heterotrimer of A, B and C subunits.

It carries out the reaction L-glutamyl-tRNA(Gln) + L-glutamine + ATP + H2O = L-glutaminyl-tRNA(Gln) + L-glutamate + ADP + phosphate + H(+). The catalysed reaction is L-aspartyl-tRNA(Asn) + L-glutamine + ATP + H2O = L-asparaginyl-tRNA(Asn) + L-glutamate + ADP + phosphate + 2 H(+). Functionally, allows the formation of correctly charged Asn-tRNA(Asn) or Gln-tRNA(Gln) through the transamidation of misacylated Asp-tRNA(Asn) or Glu-tRNA(Gln) in organisms which lack either or both of asparaginyl-tRNA or glutaminyl-tRNA synthetases. The reaction takes place in the presence of glutamine and ATP through an activated phospho-Asp-tRNA(Asn) or phospho-Glu-tRNA(Gln). The polypeptide is Aspartyl/glutamyl-tRNA(Asn/Gln) amidotransferase subunit B (Ehrlichia canis (strain Jake)).